We begin with the raw amino-acid sequence, 141 residues long: Large ribosomal subunit protein bL17 (141 aa).

This sequence belongs to the bacterial ribosomal protein bL17 family. In terms of assembly, part of the 50S ribosomal subunit. Contacts protein L32.

In Allorhizobium ampelinum (strain ATCC BAA-846 / DSM 112012 / S4) (Agrobacterium vitis (strain S4)), this protein is Large ribosomal subunit protein bL17.